A 249-amino-acid chain; its full sequence is Uridylate kinase (249 aa).

15–18 (KLSG) provides a ligand contact to ATP. Residues 23-28 (GEEGFG) are involved in allosteric activation by GTP. Glycine 57 serves as a coordination point for UMP. ATP is bound by residues glycine 58 and arginine 62. Residues aspartate 77 and 138–145 (TGNPFFTT) contribute to the UMP site. Residues threonine 165, phenylalanine 171, and aspartate 174 each contribute to the ATP site.

It belongs to the UMP kinase family. As to quaternary structure, homohexamer.

The protein localises to the cytoplasm. The catalysed reaction is UMP + ATP = UDP + ADP. The protein operates within pyrimidine metabolism; CTP biosynthesis via de novo pathway; UDP from UMP (UMPK route): step 1/1. With respect to regulation, allosterically activated by GTP. Inhibited by UTP. Its function is as follows. Catalyzes the reversible phosphorylation of UMP to UDP. The sequence is that of Uridylate kinase from Psychromonas ingrahamii (strain DSM 17664 / CCUG 51855 / 37).